The sequence spans 1574 residues: Multiple epidermal growth factor-like domains protein 6 (1574 aa).

A signal peptide spans 1–27 (MPVRAEARAAWRVVALALLLLPAMPAA). The 83-residue stretch at 40-122 (MPHVCAEQKL…QKPGQEGCLS (83 aa)) folds into the EMI domain. Intrachain disulfides connect cysteine 44–cysteine 108, cysteine 74–cysteine 80, cysteine 107–cysteine 120, cysteine 127–cysteine 138, cysteine 134–cysteine 147, cysteine 149–cysteine 162, cysteine 168–cysteine 179, cysteine 175–cysteine 188, cysteine 190–cysteine 203, cysteine 209–cysteine 220, cysteine 216–cysteine 230, cysteine 232–cysteine 245, cysteine 251–cysteine 262, cysteine 258–cysteine 271, cysteine 273–cysteine 286, cysteine 292–cysteine 303, cysteine 299–cysteine 312, cysteine 314–cysteine 327, cysteine 338–cysteine 349, cysteine 345–cysteine 358, cysteine 360–cysteine 373, cysteine 379–cysteine 389, cysteine 385–cysteine 398, cysteine 400–cysteine 411, cysteine 419–cysteine 430, cysteine 426–cysteine 439, cysteine 441–cysteine 454, cysteine 524–cysteine 537, cysteine 531–cysteine 544, cysteine 546–cysteine 555, cysteine 568–cysteine 580, cysteine 574–cysteine 587, cysteine 589–cysteine 598, cysteine 611–cysteine 623, cysteine 617–cysteine 630, cysteine 632–cysteine 641, cysteine 654–cysteine 668, cysteine 660–cysteine 675, cysteine 677–cysteine 686, cysteine 699–cysteine 711, cysteine 705–cysteine 718, cysteine 722–cysteine 731, cysteine 744–cysteine 755, cysteine 750–cysteine 762, cysteine 764–cysteine 773, cysteine 786–cysteine 799, cysteine 793–cysteine 806, cysteine 808–cysteine 817, cysteine 830–cysteine 842, cysteine 836–cysteine 849, cysteine 851–cysteine 860, cysteine 873–cysteine 886, cysteine 879–cysteine 893, cysteine 895–cysteine 904, cysteine 917–cysteine 929, cysteine 923–cysteine 936, cysteine 938–cysteine 947, cysteine 960–cysteine 972, cysteine 966–cysteine 979, cysteine 981–cysteine 990, cysteine 1003–cysteine 1015, cysteine 1009–cysteine 1022, cysteine 1024–cysteine 1033, cysteine 1046–cysteine 1058, cysteine 1052–cysteine 1065, cysteine 1067–cysteine 1076, cysteine 1089–cysteine 1101, cysteine 1095–cysteine 1108, cysteine 1110–cysteine 1119, cysteine 1132–cysteine 1144, cysteine 1138–cysteine 1151, cysteine 1153–cysteine 1162, cysteine 1175–cysteine 1187, cysteine 1181–cysteine 1194, cysteine 1196–cysteine 1205, cysteine 1218–cysteine 1231, cysteine 1224–cysteine 1238, cysteine 1240–cysteine 1249, cysteine 1262–cysteine 1274, cysteine 1268–cysteine 1281, cysteine 1283–cysteine 1292, cysteine 1305–cysteine 1317, cysteine 1311–cysteine 1324, cysteine 1326–cysteine 1335, cysteine 1348–cysteine 1360, cysteine 1354–cysteine 1367, cysteine 1369–cysteine 1378, cysteine 1391–cysteine 1403, cysteine 1397–cysteine 1410, cysteine 1412–cysteine 1421, cysteine 1434–cysteine 1446, cysteine 1440–cysteine 1453, cysteine 1455–cysteine 1464, cysteine 1477–cysteine 1489, cysteine 1483–cysteine 1496, cysteine 1498–cysteine 1507, cysteine 1520–cysteine 1532, cysteine 1526–cysteine 1539, and cysteine 1541–cysteine 1550. One can recognise an EGF-like 1; calcium-binding domain in the interval 123-163 (DVDECASANGGCEGPCCNTVGGFYCRCPPGYQLQGDGKTCQ). One can recognise an EGF-like 2; calcium-binding domain in the interval 164 to 204 (DVDECRAHNGGCQHRCVNTPGSYLCECKPGFRLHTDGRTCL). 2 consecutive EGF-like domains span residues 205–246 (AISS…RRCV) and 247–287 (RRSP…KTCE). The EGF-like 5; calcium-binding domain maps to 288–328 (DVDECALGLAQCAHGCLNTQGSFKCVCHAGYELGADGRQCY). 2 EGF-like domains span residues 334 to 374 (IVNS…KTCI) and 375 to 412 (DIDD…DGCG). The EGF-like 8; calcium-binding domain maps to 415–455 (DVDECASGHGGCEHHCSNLAGSFQCFCEAGYRLDEDRRGCT). 24 consecutive EGF-like domains span residues 520 to 556 (FGHD…IICN), 564 to 599 (FGKN…AHCE), 607 to 642 (YGKH…RFCH), 650 to 687 (FGPG…ERCQ), 695 to 732 (FGPG…EDCG), 740 to 774 (FGVN…EDCG), 782 to 818 (WGLG…SRCQ), 826 to 861 (YGTG…LSCQ), 869 to 905 (WGPD…PRCE), 913 to 948 (YGPS…SFCE), 956 to 991 (FGLD…PRCA), 999 to 1034 (FGLN…PTCL), 1042 to 1077 (YGKN…LACE), 1085 to 1120 (YAAG…DKCQ), 1128 to 1163 (FGVH…PHCE), 1171 to 1206 (FGEA…LSCE), 1214 to 1250 (FGKD…TGCL), 1258 to 1293 (YGPG…ADCS), 1301 to 1336 (FGPS…VRCE), 1344 to 1379 (FGKG…PHCE), 1387 to 1422 (YGAA…QACE), 1430 to 1465 (HGPG…QFCE), 1473 to 1508 (FGDG…AACD), and 1516 to 1551 (FGPG…PTCR). Over residues 1555–1568 (TQISSSRPAPQHPS) the composition is skewed to polar residues. Residues 1555–1574 (TQISSSRPAPQHPSSRAMKH) are disordered.

As to expression, expressed in lung.

Its subcellular location is the secreted. This Rattus norvegicus (Rat) protein is Multiple epidermal growth factor-like domains protein 6 (Megf6).